We begin with the raw amino-acid sequence, 316 residues long: PHD finger protein 20-like protein 1 (316 aa).

Residues 11–71 form the Tudor 1 domain; it reads ITFEIGARLE…SNRLRPLERP (61 aa). Glycyl lysine isopeptide (Lys-Gly) (interchain with G-Cter in SUMO2) cross-links involve residues Lys75 and Lys79. Residues 85 to 141 form the Tudor 2 domain; it reads FDFKAGEEVLARWTDCRYYPAKIEAINKEGTFTVQFYDGVIRCLKRMHIKAMPEDAK. Positions 183 to 237 are disordered; it reads AKNKTGNKPRTSANSNKDKEKDERKWFKVPSKKEETSTSITTPEVEKKEDLPTSS. Residues 186–197 show a composition bias toward polar residues; it reads KTGNKPRTSANS. The span at 198–218 shows a compositional bias: basic and acidic residues; the sequence is NKDKEKDERKWFKVPSKKEET.

As to quaternary structure, interacts with methylated DNMT1 (DNMT1K142me1). Interacts with SOX2.

The protein resides in the nucleus. Is a negative regulator of proteasomal degradation of a set of methylated proteins, including DNMT1 and SOX2. Involved in the maintainance of embryonic stem cells pluripotency, through the regulation of SOX2 levels. This chain is PHD finger protein 20-like protein 1 (PHF20L1), found in Bos taurus (Bovine).